Reading from the N-terminus, the 1935-residue chain is Myosin heavy chain, fast skeletal muscle (1935 aa).

The Myosin N-terminal SH3-like domain occupies 32–81 (DAKTAFFVVDPDEMYLKGTLVSKEGGKATVKTHSGKTVTVKEDEIFPMNP). The Myosin motor domain maps to 85 to 779 (DKIEDMAMMT…LLGALEEMRD (695 aa)). Lys-129 carries the N6,N6,N6-trimethyllysine modification. 178–185 (GESGAGKT) provides a ligand contact to ATP. Actin-binding regions lie at residues 659–681 (LMTN…ESKT) and 761–775 (HTKV…GALE). The IQ domain occupies 782-811 (LALLVTMTQALCRGYVMRKEFVKMMERRES). The hinge stretch occupies residues 812–839 (IYSIQYNIRSFMNVKHWPWMKLYFKIKP). A coiled-coil region spans residues 840–1935 (LLKSAETEKE…RDAGKSKDEE (1096 aa)). 2 disordered regions span residues 1589 to 1608 (RNSQ…EVRS) and 1902 to 1935 (HELE…KDEE). Residues 1592 to 1603 (QRVIDSMQSTLD) show a composition bias toward polar residues. Composition is skewed to basic and acidic residues over residues 1902–1913 (HELEEAQERADV) and 1924–1935 (KSRDAGKSKDEE).

Belongs to the TRAFAC class myosin-kinesin ATPase superfamily. Myosin family. Muscle myosin is a hexameric protein that consists of 2 heavy chain subunits (MHC), 2 alkali light chain subunits (MLC) and 2 regulatory light chain subunits (MLC-2).

It is found in the cytoplasm. It localises to the myofibril. Functionally, muscle contraction. This Cyprinus carpio (Common carp) protein is Myosin heavy chain, fast skeletal muscle.